Here is a 248-residue protein sequence, read N- to C-terminus: Ubiquinone/menaquinone biosynthesis C-methyltransferase UbiE (248 aa).

2 residues coordinate S-adenosyl-L-methionine: Ser-68 and Asp-92.

It belongs to the class I-like SAM-binding methyltransferase superfamily. MenG/UbiE family.

It catalyses the reaction a 2-demethylmenaquinol + S-adenosyl-L-methionine = a menaquinol + S-adenosyl-L-homocysteine + H(+). It carries out the reaction a 2-methoxy-6-(all-trans-polyprenyl)benzene-1,4-diol + S-adenosyl-L-methionine = a 5-methoxy-2-methyl-3-(all-trans-polyprenyl)benzene-1,4-diol + S-adenosyl-L-homocysteine + H(+). It functions in the pathway quinol/quinone metabolism; menaquinone biosynthesis; menaquinol from 1,4-dihydroxy-2-naphthoate: step 2/2. It participates in cofactor biosynthesis; ubiquinone biosynthesis. In terms of biological role, methyltransferase required for the conversion of demethylmenaquinol (DMKH2) to menaquinol (MKH2) and the conversion of 2-polyprenyl-6-methoxy-1,4-benzoquinol (DDMQH2) to 2-polyprenyl-3-methyl-6-methoxy-1,4-benzoquinol (DMQH2). This chain is Ubiquinone/menaquinone biosynthesis C-methyltransferase UbiE, found in Rickettsia conorii (strain ATCC VR-613 / Malish 7).